A 393-amino-acid polypeptide reads, in one-letter code: MDGPAHQTDTVMSDAAGQQPAPPSQPVAGIDNIPATLSHGGRFIQYNIFGNIFEVTAKYKPPIMPIGKGAYGIVCSALNSETNEHVAIKKIANAFDNKIDAKRTLREIKLLRHMDHENIVAIRDIIPPPQREAFNDVYIAYELMDTDLHQIIRSNQGLSEEHCQYFLYQILRGLKYIHSANVLHRDLKPSNLLLNANCDLKICDFGLARVTSETDFMTEYVVTRWYRAPELLLNSSDYTAAIDVWSVGCIFMELMDRKPLFPGRDHVHQLRLLMELIGTPSEAEMEFLNENAKRYIRQLPLYRRQSFVEKFPHVNPAAIDLVEKMLTFDPRRRITVEDALAHPYLTSLHDISDEPVCMTPFNFDFEQHALTEEQMKELIYREGLAFNPEYQHM.

Residues 1-32 (MDGPAHQTDTVMSDAAGQQPAPPSQPVAGIDN) form a disordered region. The 286-residue stretch at 60–345 (KPPIMPIGKG…VEDALAHPYL (286 aa)) folds into the Protein kinase domain. Residues 66-74 (IGKGAYGIV) and K89 contribute to the ATP site. D186 serves as the catalytic Proton acceptor. T218 bears the Phosphothreonine mark. The TXY signature appears at 218–220 (TEY). The residue at position 220 (Y220) is a Phosphotyrosine.

Belongs to the protein kinase superfamily. CMGC Ser/Thr protein kinase family. MAP kinase subfamily. Mg(2+) is required as a cofactor. Post-translationally, dually phosphorylated on Thr-218 and Tyr-220, which activates the enzyme. Very low autophosphorylation, although dramatically increased when Mn(2+) is added to the reaction instead of Mg(2+).

It catalyses the reaction L-seryl-[protein] + ATP = O-phospho-L-seryl-[protein] + ADP + H(+). The enzyme catalyses L-threonyl-[protein] + ATP = O-phospho-L-threonyl-[protein] + ADP + H(+). Its activity is regulated as follows. Activated by tyrosine and threonine phosphorylation. The protein is Mitogen-activated protein kinase homolog NTF4 (NTF4) of Nicotiana tabacum (Common tobacco).